The primary structure comprises 238 residues: Transmembrane protein 127 (238 aa).

Residue methionine 1 is modified to N-acetylmethionine. Residues methionine 1–glycine 11 are compositionally biased toward gly residues. The segment at methionine 1–proline 27 is disordered. Serine 17 carries the post-translational modification Phosphoserine. 3 consecutive transmembrane segments (helical) span residues isoleucine 96–phenylalanine 116, alanine 130–alanine 150, and valine 169–leucine 189.

Belongs to the TMEM127 family.

The protein resides in the cell membrane. The protein localises to the cytoplasm. Its function is as follows. Controls cell proliferation acting as a negative regulator of TOR signaling pathway mediated by mTORC1. May act as a tumor suppressor. The protein is Transmembrane protein 127 (Tmem127) of Mus musculus (Mouse).